We begin with the raw amino-acid sequence, 222 residues long: 2-hydroxypent-2,4-dienoate hydratase (222 aa).

The protein belongs to the hydratase/decarboxylase family.

It functions in the pathway aromatic compound metabolism; benzoate degradation via hydroxylation. Conversion of 2-hydroxypent-2,4-dienoate into 4-hydroxy-2-oxopentanoate. In Pseudomonas putida (Arthrobacter siderocapsulatus), this protein is 2-hydroxypent-2,4-dienoate hydratase (xylJ).